The sequence spans 458 residues: PH domain-containing protein DDB_G0274775 (458 aa).

A PH domain is found at 15–112; it reads PSDREGWLTK…WMESIKRNLD (98 aa). The disordered stretch occupies residues 111–154; that stretch reads LDGEGGMKSGGNDIVSSPKINSEPTPKVNQNGSAPEKSSLSSPR. The span at 124–142 shows a compositional bias: polar residues; that stretch reads IVSSPKINSEPTPKVNQNG. The segment covering 143–154 has biased composition (low complexity); the sequence is SAPEKSSLSSPR.

This chain is PH domain-containing protein DDB_G0274775, found in Dictyostelium discoideum (Social amoeba).